The sequence spans 145 residues: UPF0310 protein Mvan_0064 (145 aa).

The protein belongs to the UPF0310 family.

This is UPF0310 protein Mvan_0064 from Mycolicibacterium vanbaalenii (strain DSM 7251 / JCM 13017 / BCRC 16820 / KCTC 9966 / NRRL B-24157 / PYR-1) (Mycobacterium vanbaalenii).